Here is a 171-residue protein sequence, read N- to C-terminus: MTAILITGYRSFEIGIFDHKDPRVSIIKQAIRKDLIGYLENGVDWFIFTGNLGFEQWALEVANELKEEYPLQIGTIFLFETHGDRWNEKNQEVLSQFRAVDFVKYYFPNYEQPTQFSQYYQFLLEKTEGAYVFYDTENETNLKYFLKKAKDMPHYQLLLLTFDRLNDMSQS.

It belongs to the UPF0398 family.

This Streptococcus pyogenes serotype M6 (strain ATCC BAA-946 / MGAS10394) protein is UPF0398 protein M6_Spy1399.